A 559-amino-acid polypeptide reads, in one-letter code: MAKGSKGLRASSKAVDPTLDALFASSAGPVQAPAKSKYSTLLDQKVREPAKPKVHLEEDDEVLSEISEELSFEEDGPSDEDEDEDEDEENSEQEDGSGDEQEEEESEDVDETMKDAPVELDDIIDATEDKSNKERKRKRKNDNDDLEGKYLDKVAAEEEADRAGKRQKNDALTKTEKPAVDEEDAGNESDIPVHETLVKDSKASDLDKAARTVFLANVSTEAISSKSAKKTLMAHLSSVLEKDATPPQTIESLRFRSVAFAGGSLPKRAAYITKSLMDSTTKSANAYVVYSTTAAARTAATKLNGTQVLDRHLRVDSVAHPSPTDHRRCVFVGNLGFVDDETVLNTNAEGDTTEKKKNKTPSDIEEGLWRTFSTQGKVENVRVVRDSKTRVGKGFAYVQFYDANDVEAALLLDGKKFPPMLPRKLRVTRAKDPRKTALAQERARGKHISTNGPKSTKYKHKATPEEQSMAGRTSKLLGRSAAVQQRHKKRPSAHGESREAEGQPAGIKGPEQFVFEGRRASARDGLPKDLKQKKGKGKKSGRPQNHGTKRASEWKKKKN.

Residues 24–194 (ASSAGPVQAP…AGNESDIPVH (171 aa)) are disordered. Residues 44-56 (QKVREPAKPKVHL) show a composition bias toward basic and acidic residues. Acidic residues predominate over residues 57 to 110 (EEDDEVLSEISEELSFEEDGPSDEDEDEDEDEENSEQEDGSGDEQEEEESEDVD). Basic and acidic residues predominate over residues 141 to 180 (NDNDDLEGKYLDKVAAEEEADRAGKRQKNDALTKTEKPAV). RRM domains follow at residues 211-320 (RTVF…SVAH) and 328-432 (RCVF…RAKD). A disordered region spans residues 429-559 (RAKDPRKTAL…RASEWKKKKN (131 aa)). Composition is skewed to basic and acidic residues over residues 516-532 (EGRR…DLKQ) and 550-559 (RASEWKKKKN).

It belongs to the RRM RBM34 family.

It is found in the nucleus. The protein resides in the nucleolus. Functionally, involved in pre-25S rRNA processing. The protein is Nucleolar protein 12 (NOP12) of Gibberella zeae (strain ATCC MYA-4620 / CBS 123657 / FGSC 9075 / NRRL 31084 / PH-1) (Wheat head blight fungus).